We begin with the raw amino-acid sequence, 472 residues long: ATP-dependent protease ATPase subunit HslU (472 aa).

ATP contacts are provided by residues isoleucine 20, 62-67 (GVGKTE), aspartate 285, glutamate 350, and arginine 422.

This sequence belongs to the ClpX chaperone family. HslU subfamily. As to quaternary structure, a double ring-shaped homohexamer of HslV is capped on each side by a ring-shaped HslU homohexamer. The assembly of the HslU/HslV complex is dependent on binding of ATP.

It is found in the cytoplasm. In terms of biological role, ATPase subunit of a proteasome-like degradation complex; this subunit has chaperone activity. The binding of ATP and its subsequent hydrolysis by HslU are essential for unfolding of protein substrates subsequently hydrolyzed by HslV. HslU recognizes the N-terminal part of its protein substrates and unfolds these before they are guided to HslV for hydrolysis. In Lactiplantibacillus plantarum (strain ATCC BAA-793 / NCIMB 8826 / WCFS1) (Lactobacillus plantarum), this protein is ATP-dependent protease ATPase subunit HslU.